Here is a 79-residue protein sequence, read N- to C-terminus: Small ribosomal subunit protein bS16c (79 aa).

Belongs to the bacterial ribosomal protein bS16 family.

Its subcellular location is the plastid. It localises to the chloroplast. In Thalassiosira pseudonana (Marine diatom), this protein is Small ribosomal subunit protein bS16c.